A 132-amino-acid polypeptide reads, in one-letter code: UPF0102 protein LI0223 (132 aa).

This sequence belongs to the UPF0102 family.

This is UPF0102 protein LI0223 from Lawsonia intracellularis (strain PHE/MN1-00).